The primary structure comprises 483 residues: Sodium/pantothenate symporter (483 aa).

The Periplasmic segment spans residues methionine 1–glutamine 2. The chain crosses the membrane as a helical span at residues leucine 3–alanine 23. Over methionine 24–serine 42 the chain is Cytoplasmic. The helical transmembrane segment at methionine 43–isoleucine 63 threads the bilayer. Residues glycine 64–glycine 73 are Periplasmic-facing. A helical membrane pass occupies residues leucine 74–leucine 94. Over glycine 95 to leucine 123 the chain is Cytoplasmic. A helical membrane pass occupies residues valine 124–isoleucine 144. At glycine 145–proline 157 the chain is on the periplasmic side. Residues tyrosine 158–phenylalanine 178 form a helical membrane-spanning segment. At arginine 179–glycine 189 the chain is on the cytoplasmic side. The chain crosses the membrane as a helical span at residues leucine 190–leucine 210. Topologically, residues serine 211–aspartate 232 are periplasmic. A helical membrane pass occupies residues isoleucine 233–leucine 253. Over proline 254–glycine 272 the chain is Cytoplasmic. The helical transmembrane segment at isoleucine 273–leucine 293 threads the bilayer. Residues glycine 294–aspartate 305 lie on the Periplasmic side of the membrane. A helical membrane pass occupies residues leucine 306 to alanine 326. Topologically, residues alanine 327–arginine 368 are cytoplasmic. The helical transmembrane segment at methionine 369–proline 389 threads the bilayer. Residues glutamate 390 to methionine 391 are Periplasmic-facing. The chain crosses the membrane as a helical span at residues isoleucine 392–valine 412. Topologically, residues leucine 413–lysine 423 are cytoplasmic. A helical membrane pass occupies residues glycine 424–isoleucine 444. Glutamine 445 is a topological domain (periplasmic). The helical transmembrane segment at tyrosine 446 to glycine 466 threads the bilayer. Topologically, residues asparagine 467–lysine 483 are cytoplasmic.

Belongs to the sodium:solute symporter (SSF) (TC 2.A.21) family.

It localises to the cell inner membrane. It carries out the reaction (R)-pantothenate(in) + Na(+)(in) = (R)-pantothenate(out) + Na(+)(out). Pantothenate uptake is not reduced in osmotically shocked cells or by ATP depletion with arsenate, but is reduced greater than 90% by the dissipation of the membrane electrochemical gradient with 2,4-dinitrophenol. Its function is as follows. Catalyzes the sodium-dependent uptake of extracellular pantothenate. This Escherichia coli (strain K12) protein is Sodium/pantothenate symporter.